A 234-amino-acid polypeptide reads, in one-letter code: Glucosamine-6-phosphate deaminase (234 aa).

The active-site Proton acceptor; for enolization step is the aspartate 62. Asparagine 128 (for ring-opening step) is an active-site residue. Histidine 130 acts as the Proton acceptor; for ring-opening step in catalysis. Glutamate 135 acts as the For ring-opening step in catalysis.

Belongs to the glucosamine/galactosamine-6-phosphate isomerase family. NagB subfamily.

It carries out the reaction alpha-D-glucosamine 6-phosphate + H2O = beta-D-fructose 6-phosphate + NH4(+). Its pathway is amino-sugar metabolism; N-acetylneuraminate degradation; D-fructose 6-phosphate from N-acetylneuraminate: step 5/5. Functionally, catalyzes the reversible isomerization-deamination of glucosamine 6-phosphate (GlcN6P) to form fructose 6-phosphate (Fru6P) and ammonium ion. This chain is Glucosamine-6-phosphate deaminase, found in Streptococcus pyogenes serotype M49 (strain NZ131).